The chain runs to 391 residues: MIGTPYTEGARRAMLLGCGELGKEVAIELQRLGVEVIGVDRYANAPAMQVAHRSHVINMLDAKALRAIIELEKPHLVIPEIEAIATQTLVEMEAEGVNIIPTARATKLTMDREGIRRLAAETLGLPTSPYFFCDTETEFNQAIREIGVPCVVKPVMSSSGKGQSVIRDIAQSNKAWQYAQEGGRAGGGRVIVEGFVPFDYEITLLTVSAVNGIHFCAPIGHRQEDGDYRESWQPQAMSDEVLAKSQAIASKVVEALGGYGLFGVELFVKGNEVYFSEVSPRPHDTGLVTLISQDLSEFALHVRAILGLPIPNIHQHGPSASAVILAEGTSSNIRYQGIGAALEAVNTQLRLFAKPDIDGRRRLGVALARDIDIDSAISKALDSASKVKVIF.

Residues 20–21 (EL) and Glu-80 each bind N(1)-(5-phospho-beta-D-ribosyl)glycinamide. ATP is bound by residues Arg-112, Lys-153, 158 to 163 (SSGKGQ), 193 to 196 (EGFV), and Glu-201. The region spanning 117–306 (RLAAETLGLP…EFALHVRAIL (190 aa)) is the ATP-grasp domain. Glu-265 and Glu-277 together coordinate Mg(2+). N(1)-(5-phospho-beta-D-ribosyl)glycinamide is bound by residues Asp-284, Lys-354, and 361–362 (RR).

It belongs to the PurK/PurT family. Homodimer.

It carries out the reaction N(1)-(5-phospho-beta-D-ribosyl)glycinamide + formate + ATP = N(2)-formyl-N(1)-(5-phospho-beta-D-ribosyl)glycinamide + ADP + phosphate + H(+). It participates in purine metabolism; IMP biosynthesis via de novo pathway; N(2)-formyl-N(1)-(5-phospho-D-ribosyl)glycinamide from N(1)-(5-phospho-D-ribosyl)glycinamide (formate route): step 1/1. Involved in the de novo purine biosynthesis. Catalyzes the transfer of formate to 5-phospho-ribosyl-glycinamide (GAR), producing 5-phospho-ribosyl-N-formylglycinamide (FGAR). Formate is provided by PurU via hydrolysis of 10-formyl-tetrahydrofolate. In Shewanella sp. (strain W3-18-1), this protein is Formate-dependent phosphoribosylglycinamide formyltransferase.